The chain runs to 354 residues: NADH-quinone oxidoreductase subunit H (354 aa).

8 consecutive transmembrane segments (helical) span residues 22-42 (ILIR…YLIL), 91-111 (YLIA…VIPF), 124-144 (LLYV…AGWA), 168-188 (MGFA…SAIV), 203-223 (ILSW…ISGV), 255-275 (LFFL…ALMF), 291-311 (IPGF…FIWI), and 326-346 (LGWK…AIWI).

This sequence belongs to the complex I subunit 1 family. As to quaternary structure, NDH-1 is composed of 14 different subunits. Subunits NuoA, H, J, K, L, M, N constitute the membrane sector of the complex.

The protein resides in the cell inner membrane. It carries out the reaction a quinone + NADH + 5 H(+)(in) = a quinol + NAD(+) + 4 H(+)(out). Functionally, NDH-1 shuttles electrons from NADH, via FMN and iron-sulfur (Fe-S) centers, to quinones in the respiratory chain. The immediate electron acceptor for the enzyme in this species is believed to be ubiquinone. Couples the redox reaction to proton translocation (for every two electrons transferred, four hydrogen ions are translocated across the cytoplasmic membrane), and thus conserves the redox energy in a proton gradient. This subunit may bind ubiquinone. The protein is NADH-quinone oxidoreductase subunit H of Cupriavidus taiwanensis (strain DSM 17343 / BCRC 17206 / CCUG 44338 / CIP 107171 / LMG 19424 / R1) (Ralstonia taiwanensis (strain LMG 19424)).